The sequence spans 473 residues: Photosystem II CP43 reaction center protein (473 aa).

The propeptide occupies 1–14; it reads MKTLYSLRRFYPVE. Position 15 is an N-acetylthreonine (Thr-15). Thr-15 is subject to Phosphothreonine. Helical transmembrane passes span 69–93, 134–155, 178–200, 255–275, and 291–312; these read LFEVAHFVPEKPMYEQGLILLPHLA, LLGPETLEESFPFFGYVWKDRN, KALYFGGVYDTWAPGGGDVRKIT, KPFAWARRALVWSGEAYLSYS, and WFNNTAYPSEFYGPTGPEASQA. A [CaMn4O5] cluster-binding site is contributed by Glu-367. Residues 447–471 form a helical membrane-spanning segment; that stretch reads RARAAAAGFEKGIDRDFEPVLSMTP.

The protein belongs to the PsbB/PsbC family. PsbC subfamily. In terms of assembly, PSII is composed of 1 copy each of membrane proteins PsbA, PsbB, PsbC, PsbD, PsbE, PsbF, PsbH, PsbI, PsbJ, PsbK, PsbL, PsbM, PsbT, PsbX, PsbY, PsbZ, Psb30/Ycf12, at least 3 peripheral proteins of the oxygen-evolving complex and a large number of cofactors. It forms dimeric complexes. It depends on Binds multiple chlorophylls and provides some of the ligands for the Ca-4Mn-5O cluster of the oxygen-evolving complex. It may also provide a ligand for a Cl- that is required for oxygen evolution. PSII binds additional chlorophylls, carotenoids and specific lipids. as a cofactor.

It is found in the plastid. The protein localises to the chloroplast thylakoid membrane. Functionally, one of the components of the core complex of photosystem II (PSII). It binds chlorophyll and helps catalyze the primary light-induced photochemical processes of PSII. PSII is a light-driven water:plastoquinone oxidoreductase, using light energy to abstract electrons from H(2)O, generating O(2) and a proton gradient subsequently used for ATP formation. The chain is Photosystem II CP43 reaction center protein from Morus indica (Mulberry).